A 212-amino-acid polypeptide reads, in one-letter code: Glutathione S-transferase P 1 (212 aa).

Residues 2–83 enclose the GST N-terminal domain; sequence PGYVLTYFPV…YLGNKHGLTG (82 aa). Residues Y8, R14, W39, K47, 54-55, and 67-68 contribute to the glutathione site; these read QL and QS. Residues 85–206 form the GST C-terminal domain; it reads NDEERGHIDM…KSDARNKRPI (122 aa).

It belongs to the GST superfamily. Pi family. Homodimer. In terms of tissue distribution, expressed only in embryos. Not expressed in liver, lung, heart, kidney and ovary.

Its subcellular location is the cytoplasm. It localises to the mitochondrion. The protein localises to the nucleus. It catalyses the reaction RX + glutathione = an S-substituted glutathione + a halide anion + H(+). In terms of biological role, conjugation of reduced glutathione to a wide number of exogenous and endogenous hydrophobic electrophiles. Highly active towards 1-chloro-2,4-dinitrobenzene and organic isothiocyanates, but shows no detectable activity towards 1,2-dichloro-4-nitrobenzene, p-nitrobenzylchloride, trans-4-phenyl-3-buten-2-one (tPBO) and ethacrynic acid. May be associated with cellular proliferation. This is Glutathione S-transferase P 1 (gstp1) from Xenopus laevis (African clawed frog).